A 340-amino-acid polypeptide reads, in one-letter code: Glyceraldehyde-3-phosphate dehydrogenase (340 aa).

NAD(+) contacts are provided by residues 11–12 and glycine 109; that span reads TI. A disulfide bridge links cysteine 123 with cysteine 149. A D-glyceraldehyde 3-phosphate-binding site is contributed by 138-140; sequence SCN. Residue cysteine 139 is the Nucleophile of the active site. Position 167 (arginine 167) interacts with NAD(+). 193–194 provides a ligand contact to D-glyceraldehyde 3-phosphate; it reads HA. Residue glutamine 300 participates in NAD(+) binding.

It belongs to the glyceraldehyde-3-phosphate dehydrogenase family. In terms of assembly, homotetramer.

It localises to the cytoplasm. It catalyses the reaction D-glyceraldehyde 3-phosphate + phosphate + NADP(+) = (2R)-3-phospho-glyceroyl phosphate + NADPH + H(+). The catalysed reaction is D-glyceraldehyde 3-phosphate + phosphate + NAD(+) = (2R)-3-phospho-glyceroyl phosphate + NADH + H(+). Its pathway is carbohydrate degradation; glycolysis; pyruvate from D-glyceraldehyde 3-phosphate: step 1/5. Its function is as follows. Can use both NAD and NADP as cofactors, but exhibits a marked preference for NADP. The chain is Glyceraldehyde-3-phosphate dehydrogenase (gap) from Saccharolobus solfataricus (strain ATCC 35092 / DSM 1617 / JCM 11322 / P2) (Sulfolobus solfataricus).